The following is a 165-amino-acid chain: MFGSRKASRRRSYRSRSTMGSRVDIDFCKFEEPPSPREGERRCLFVLDPLEHYVESKDRMVELLPGRVETVDGVNTYYINGCTTEEKFPGLDYTCYRVDLRDTYRSRCAVPPEATPEEKFISHRHRKLIPYNSRKPVVVYLPEDAQLHYRIWTGGQEVVAKKAEE.

It belongs to the protease inhibitor I11 (ecotin) family.

This is Ecotin-like protein 4 from Trypanosoma brucei brucei (strain 927/4 GUTat10.1).